The primary structure comprises 308 residues: Ribonuclease HIII (308 aa).

An RNase H type-2 domain is found at Phe88–Gln304. Residues Asp94, Glu95, and Asp199 each contribute to the a divalent metal cation site.

Belongs to the RNase HII family. RnhC subfamily. The cofactor is Mn(2+). Mg(2+) is required as a cofactor.

The protein resides in the cytoplasm. It catalyses the reaction Endonucleolytic cleavage to 5'-phosphomonoester.. Endonuclease that specifically degrades the RNA of RNA-DNA hybrids. This is Ribonuclease HIII from Staphylococcus epidermidis (strain ATCC 12228 / FDA PCI 1200).